A 152-amino-acid polypeptide reads, in one-letter code: FMN reductase (NADH) RutF (152 aa).

Belongs to the non-flavoprotein flavin reductase family. RutF subfamily.

It carries out the reaction FMNH2 + NAD(+) = FMN + NADH + 2 H(+). Catalyzes the reduction of FMN to FMNH2 which is used to reduce pyrimidine by RutA via the Rut pathway. The sequence is that of FMN reductase (NADH) RutF from Shigella dysenteriae serotype 1 (strain Sd197).